The following is a 201-amino-acid chain: Lipoprotein signal peptidase (201 aa).

3 consecutive transmembrane segments (helical) span residues 33–53 (LLLS…VLAV), 86–106 (GYTW…FWMG), and 110–130 (VSSW…GNLV). Catalysis depends on residues Asp-146 and Asp-160. Residues 158-178 (VADPSVVVGAILLVVLSIFGF) traverse the membrane as a helical segment.

This sequence belongs to the peptidase A8 family.

The protein localises to the cell membrane. The catalysed reaction is Release of signal peptides from bacterial membrane prolipoproteins. Hydrolyzes -Xaa-Yaa-Zaa-|-(S,diacylglyceryl)Cys-, in which Xaa is hydrophobic (preferably Leu), and Yaa (Ala or Ser) and Zaa (Gly or Ala) have small, neutral side chains.. It participates in protein modification; lipoprotein biosynthesis (signal peptide cleavage). Its function is as follows. This protein specifically catalyzes the removal of signal peptides from prolipoproteins. The polypeptide is Lipoprotein signal peptidase (Mycobacterium leprae (strain Br4923)).